A 175-amino-acid chain; its full sequence is NAD(P)H-quinone oxidoreductase subunit J (175 aa).

It belongs to the complex I 30 kDa subunit family. NDH-1 can be composed of about 15 different subunits; different subcomplexes with different compositions have been identified which probably have different functions.

The protein resides in the cellular thylakoid membrane. It carries out the reaction a plastoquinone + NADH + (n+1) H(+)(in) = a plastoquinol + NAD(+) + n H(+)(out). The enzyme catalyses a plastoquinone + NADPH + (n+1) H(+)(in) = a plastoquinol + NADP(+) + n H(+)(out). In terms of biological role, NDH-1 shuttles electrons from an unknown electron donor, via FMN and iron-sulfur (Fe-S) centers, to quinones in the respiratory and/or the photosynthetic chain. The immediate electron acceptor for the enzyme in this species is believed to be plastoquinone. Couples the redox reaction to proton translocation, and thus conserves the redox energy in a proton gradient. Cyanobacterial NDH-1 also plays a role in inorganic carbon-concentration. The protein is NAD(P)H-quinone oxidoreductase subunit J of Trichormus variabilis (strain ATCC 29413 / PCC 7937) (Anabaena variabilis).